Here is a 293-residue protein sequence, read N- to C-terminus: NAD kinase (293 aa).

The active-site Proton acceptor is Asp-73. Residues Asp-73 to Gly-74, Asn-147 to Glu-148, Arg-175, Asp-177, and Thr-188 to Ser-193 contribute to the NAD(+) site.

It belongs to the NAD kinase family. A divalent metal cation serves as cofactor.

It is found in the cytoplasm. The enzyme catalyses NAD(+) + ATP = ADP + NADP(+) + H(+). Involved in the regulation of the intracellular balance of NAD and NADP, and is a key enzyme in the biosynthesis of NADP. Catalyzes specifically the phosphorylation on 2'-hydroxyl of the adenosine moiety of NAD to yield NADP. The sequence is that of NAD kinase from Colwellia psychrerythraea (strain 34H / ATCC BAA-681) (Vibrio psychroerythus).